The following is a 320-amino-acid chain: Olfactory receptor 12D1 (320 aa).

Topologically, residues 1–23 (MLNTTSVTEFLLLGVTDIQELQP) are extracellular. The N-linked (GlcNAc...) asparagine glycan is linked to Asn-3. A helical membrane pass occupies residues 24–44 (FLFVVFLTIYFISVAGNGAIL). Over 45–55 (MIVISDPRLHS) the chain is Cytoplasmic. A helical transmembrane segment spans residues 56 to 76 (PMYFFLGNLSCLDICYSSVTL). Topologically, residues 77 to 97 (PKMLQNFLSAHKAISFLGCIS) are extracellular. Cys-95 and Cys-177 form a disulfide bridge. A helical membrane pass occupies residues 98–118 (QLHFFHFLGSTEAMLLAVMAF). The Cytoplasmic portion of the chain corresponds to 119 to 141 (DRFVAICKPLRYTVIMNPQLCTQ). The helical transmembrane segment at 142–162 (MAITIWMIGFFHALLHSLMTS) threads the bilayer. The Extracellular portion of the chain corresponds to 163–203 (RLNFCGSNRIYHFFCDVKPLLKLACGNTELNQWLLSTVTGT). A helical transmembrane segment spans residues 204-224 (IAMGPFFLTLLSYFYIITHLF). The Cytoplasmic portion of the chain corresponds to 225 to 238 (FKTHSFSMLRKALS). A helical membrane pass occupies residues 239 to 259 (TCASHFMVVILLYAPVLFTYI). At 260-270 (HHASGTSMDQD) the chain is on the extracellular side. Residues 271-291 (RITAIMYTVVTPVLNPLIYTL) form a helical membrane-spanning segment. The Cytoplasmic segment spans residues 292–320 (RNKEVKGAFNRAMKRWLWPKEILKNSSEA).

Belongs to the G-protein coupled receptor 1 family.

It is found in the cell membrane. Its function is as follows. Odorant receptor. This chain is Olfactory receptor 12D1 (OR12D1), found in Homo sapiens (Human).